The primary structure comprises 152 residues: ESAT-6 secretion machinery protein EssA (152 aa).

Residues 1–114 (MLMNSVIALT…PYIQNKQEKK (114 aa)) lie on the Cytoplasmic side of the membrane. A helical transmembrane segment spans residues 115 to 135 (IFPYILMSVGAFLTLGFVIFS). Over 136–152 (IHKGRRTKNESARKSNI) the chain is Extracellular.

This sequence belongs to the EssA family.

Its subcellular location is the cell membrane. Its function is as follows. Component of the ESAT-6 secretion system (Ess). Required for the secretion of EsxA. The polypeptide is ESAT-6 secretion machinery protein EssA (Staphylococcus aureus (strain MRSA252)).